Consider the following 494-residue polypeptide: 4-hydroxyphenylacetate 3-monooxygenase oxygenase component (494 aa).

Residues 103 to 107 (RSPDY) and His-149 each bind substrate. FAD is bound by residues 149–151 (HTL), 155–158 (QMNR), and Thr-192. 205 to 206 (ST) serves as a coordination point for substrate. 455-458 (DPVR) provides a ligand contact to FAD.

Belongs to the FADH(2)-utilizing monooxygenase family. 4-HPA 3-monooxygenase consists of a reductase component HpaI and an oxygenase component HpaH.

The catalysed reaction is 4-hydroxyphenylacetate + FADH2 + O2 = 3,4-dihydroxyphenylacetate + FAD + H2O + H(+). It functions in the pathway aromatic compound metabolism; 4-hydroxyphenylacetate degradation; pyruvate and succinate semialdehyde from 4-hydroxyphenylacetate: step 1/7. Utilizes FADH(2) supplied by HpaI, to catalyze the hydroxylation of 4-hydroxyphenylacetic acid, leading to the production of 3,4-dihydroxyphenylacetic acid (DHPA). The chain is 4-hydroxyphenylacetate 3-monooxygenase oxygenase component (hpaH) from Geobacillus sp. (strain PA-9).